The sequence spans 600 residues: Elongation factor 4 (600 aa).

Residues 4-186 enclose the tr-type G domain; the sequence is DTIRNFSIIA…EIVKKIPPPE (183 aa). Residues 16-21 and 133-136 each bind GTP; these read DHGKST and NKID.

The protein belongs to the TRAFAC class translation factor GTPase superfamily. Classic translation factor GTPase family. LepA subfamily.

The protein localises to the cell inner membrane. It carries out the reaction GTP + H2O = GDP + phosphate + H(+). Functionally, required for accurate and efficient protein synthesis under certain stress conditions. May act as a fidelity factor of the translation reaction, by catalyzing a one-codon backward translocation of tRNAs on improperly translocated ribosomes. Back-translocation proceeds from a post-translocation (POST) complex to a pre-translocation (PRE) complex, thus giving elongation factor G a second chance to translocate the tRNAs correctly. Binds to ribosomes in a GTP-dependent manner. The protein is Elongation factor 4 of Geobacter sulfurreducens (strain ATCC 51573 / DSM 12127 / PCA).